The primary structure comprises 688 residues: NADH-ubiquinone oxidoreductase 75 kDa subunit (688 aa).

In terms of domain architecture, 2Fe-2S ferredoxin-type spans 1-85 (MIIRFKINEI…DESIETEIDE (85 aa)). [2Fe-2S] cluster contacts are provided by C38, C49, C52, and C66. A 4Fe-4S His(Cys)3-ligated-type domain is found at 85 to 124 (EILKAREGVMEFLLINHPLDCPICDQGGECDLQEQTLAYG). [4Fe-4S] cluster is bound by residues H101, C105, C108, C114, C153, C156, C159, and C204. One can recognise a 4Fe-4S Mo/W bis-MGD-type domain in the interval 223 to 279 (LKNIKGIDIFDTLLTPINYQVKGGEIFRILPRINDRINEEWITDKVRFHYESYKIIE).

This sequence belongs to the complex I 75 kDa subunit family. In terms of assembly, complex I is composed of about 45 different subunits. The cofactor is [2Fe-2S] cluster. Requires [4Fe-4S] cluster as cofactor.

The protein localises to the mitochondrion inner membrane. It catalyses the reaction a ubiquinone + NADH + 5 H(+)(in) = a ubiquinol + NAD(+) + 4 H(+)(out). Its function is as follows. Core subunit of the mitochondrial membrane respiratory chain NADH dehydrogenase (Complex I) that is believed to belong to the minimal assembly required for catalysis. Complex I functions in the transfer of electrons from NADH to the respiratory chain. The immediate electron acceptor for the enzyme is believed to be ubiquinone. This is the largest subunit of complex I and it is a component of the iron-sulfur (IP) fragment of the enzyme. It may form part of the active site crevice where NADH is oxidized. The sequence is that of NADH-ubiquinone oxidoreductase 75 kDa subunit (nad11) from Dictyostelium discoideum (Social amoeba).